A 610-amino-acid polypeptide reads, in one-letter code: Elongation factor 4 (610 aa).

The tr-type G domain maps to Ser7–Lys189. GTP-binding positions include Asp19–Thr24 and Asn136–Asp139.

This sequence belongs to the TRAFAC class translation factor GTPase superfamily. Classic translation factor GTPase family. LepA subfamily.

It is found in the cell inner membrane. The catalysed reaction is GTP + H2O = GDP + phosphate + H(+). Its function is as follows. Required for accurate and efficient protein synthesis under certain stress conditions. May act as a fidelity factor of the translation reaction, by catalyzing a one-codon backward translocation of tRNAs on improperly translocated ribosomes. Back-translocation proceeds from a post-translocation (POST) complex to a pre-translocation (PRE) complex, thus giving elongation factor G a second chance to translocate the tRNAs correctly. Binds to ribosomes in a GTP-dependent manner. The chain is Elongation factor 4 from Thermus thermophilus (strain ATCC 27634 / DSM 579 / HB8).